A 174-amino-acid chain; its full sequence is Dual-action ribosomal maturation protein DarP (174 aa).

The protein belongs to the DarP family.

Its subcellular location is the cytoplasm. Functionally, member of a network of 50S ribosomal subunit biogenesis factors which assembles along the 30S-50S interface, preventing incorrect 23S rRNA structures from forming. Promotes peptidyl transferase center (PTC) maturation. The polypeptide is Dual-action ribosomal maturation protein DarP (Pseudomonas paraeruginosa (strain DSM 24068 / PA7) (Pseudomonas aeruginosa (strain PA7))).